The following is a 626-amino-acid chain: Trehalase (626 aa).

The next 2 helical transmembrane spans lie at 20–40 (KLFL…FIYL) and 45–65 (SLFF…MLDS). Positions 224, 232, 268, 277, 279, 344, and 346 each coordinate alpha,alpha-trehalose. Catalysis depends on proton donor/acceptor residues D380 and E580. The alpha,alpha-trehalose site is built by E580 and E595.

The protein belongs to the glycosyl hydrolase 37 family. In terms of assembly, forms homodimers. In terms of tissue distribution, highly expressed in flowers. Expressed at low levels in leaves and stems. Expressed in guard cells.

The protein localises to the cell membrane. The protein resides in the cytoplasm. It localises to the nucleus. It carries out the reaction alpha,alpha-trehalose + H2O = alpha-D-glucose + beta-D-glucose. Functionally, involved in the regulation of trehalose content by hydrolyzing trehalose to glucose. May play a role in the regulation of abscisic acid-induced stomatal closure in response to drought stress. This is Trehalase (TRE1) from Arabidopsis thaliana (Mouse-ear cress).